The sequence spans 147 residues: Small ribosomal subunit protein uS12 (147 aa).

Belongs to the universal ribosomal protein uS12 family. As to quaternary structure, part of the 30S ribosomal subunit.

With S4 and S5 plays an important role in translational accuracy. Located at the interface of the 30S and 50S subunits. In Methanococcus maripaludis (strain C7 / ATCC BAA-1331), this protein is Small ribosomal subunit protein uS12.